Reading from the N-terminus, the 362-residue chain is Homoisocitrate dehydrogenase (362 aa).

Val-79 to Ser-81 contributes to the NADH binding site. Ser-81 is a (2R,3S)-homoisocitrate binding site. A phosphoserine mark is found at Ser-81 and Ser-91. Residues Arg-97, Arg-107, Arg-126, Tyr-133, Lys-196, and Asn-198 each coordinate (2R,3S)-homoisocitrate. NADH is bound at residue Asn-198. Asp-232, Asp-256, and Asp-260 together coordinate Mg(2+). NADH is bound by residues Gly-289–Asp-293 and Asn-301.

This sequence belongs to the isocitrate and isopropylmalate dehydrogenases family. Mg(2+) serves as cofactor.

The protein localises to the cytoplasm. It carries out the reaction (2R,3S)-homoisocitrate + NAD(+) = 2-oxoadipate + CO2 + NADH. Its pathway is amino-acid biosynthesis; L-lysine biosynthesis via AAA pathway; L-alpha-aminoadipate from 2-oxoglutarate: step 4/5. The polypeptide is Homoisocitrate dehydrogenase (lys12) (Schizosaccharomyces pombe (strain 972 / ATCC 24843) (Fission yeast)).